Here is a 109-residue protein sequence, read N- to C-terminus: Large ribosomal subunit protein P2 (109 aa).

A disordered region spans residues 63–109 (ASVPSGGAGGASGGAAAAGGAAEEAKEEEKEEEKEESDEDMGFGLFD). Over residues 68–79 (GGAGGASGGAAA) the composition is skewed to gly residues. A compositionally biased stretch (acidic residues) spans 91-103 (EKEEEKEESDEDM). Ser-99 is subject to Phosphoserine.

It belongs to the eukaryotic ribosomal protein P1/P2 family. In terms of assembly, P1 and P2 exist as dimers at the large ribosomal subunit.

Its function is as follows. Plays an important role in the elongation step of protein synthesis. The sequence is that of Large ribosomal subunit protein P2 from Fusarium culmorum.